Consider the following 579-residue polypeptide: Eukaryotic translation initiation factor 3 subunit D (579 aa).

Disordered stretches follow at residues 1-20 (MASF…GPAS), 51-72 (NASG…RARD), and 109-170 (RRGG…FGWK). Residues 51 to 64 (NASGASNDAANARG) are compositionally biased toward low complexity. The segment covering 120–167 (GGRGGRGGAGGAGAAGGRGASKFGAGAGRGARGGRGGAAGARRGGGRF) has biased composition (gly residues). Positions 307–321 (AFDYLTVNENAADPP) are RNA gate.

This sequence belongs to the eIF-3 subunit D family. Component of the eukaryotic translation initiation factor 3 (eIF-3) complex.

Its subcellular location is the cytoplasm. Its function is as follows. mRNA cap-binding component of the eukaryotic translation initiation factor 3 (eIF-3) complex, which is involved in protein synthesis of a specialized repertoire of mRNAs and, together with other initiation factors, stimulates binding of mRNA and methionyl-tRNAi to the 40S ribosome. The eIF-3 complex specifically targets and initiates translation of a subset of mRNAs involved in cell proliferation. In the eIF-3 complex, eif3d specifically recognizes and binds the 7-methylguanosine cap of a subset of mRNAs. The sequence is that of Eukaryotic translation initiation factor 3 subunit D from Mycosarcoma maydis (Corn smut fungus).